Here is a 394-residue protein sequence, read N- to C-terminus: RNA-binding motif protein, X-linked-like-2 (394 aa).

Positions 8–86 constitute an RRM domain; it reads GKLFIGGLNL…KAIKVAQATK (79 aa). The segment covering 67-78 has biased composition (basic and acidic residues); that stretch reads RDMNGKSLDGKA. The interval 67–394 is disordered; sequence RDMNGKSLDG…MERGGGRSRY (328 aa). Residues 150–165 are compositionally biased toward pro residues; the sequence is RGPPPPPRRAGPPPKR. Basic and acidic residues-rich tracts occupy residues 196-231 and 239-285; these read PRREPPPPRRDPYLGPRDEGYSSRDGYSSRDYREPR and EYTH…REPF. A compositionally biased stretch (low complexity) spans 321 to 333; it reads YSGGRDSYSSSYG. 2 stretches are compositionally biased toward basic and acidic residues: residues 334–350 and 383–394; these read RSDRYSRGRDRVGRPDR and GRMERGGGRSRY.

It is found in the nucleus. The polypeptide is RNA-binding motif protein, X-linked-like-2 (RBMXL2) (Macaca fascicularis (Crab-eating macaque)).